We begin with the raw amino-acid sequence, 122 residues long: Large ribosomal subunit protein uL14 (122 aa).

Belongs to the universal ribosomal protein uL14 family. As to quaternary structure, part of the 50S ribosomal subunit. Forms a cluster with proteins L3 and L19. In the 70S ribosome, L14 and L19 interact and together make contacts with the 16S rRNA in bridges B5 and B8.

Functionally, binds to 23S rRNA. Forms part of two intersubunit bridges in the 70S ribosome. This chain is Large ribosomal subunit protein uL14, found in Psychromonas ingrahamii (strain DSM 17664 / CCUG 51855 / 37).